The chain runs to 1180 residues: Protocadherin-12 (1180 aa).

Residues 1–17 form the signal peptide; it reads MMLLLPFLLGLLGPGSY. Residues 18 to 716 lie on the Extracellular side of the membrane; the sequence is LFISGDCQEV…HEPGVLSTPA (699 aa). 5 Cadherin domains span residues 28 to 135, 136 to 244, 245 to 352, 355 to 460, and 461 to 565; these read ATVM…QPQF, PKDE…SPVF, AESS…APSI, TWAS…APVF, and EKSR…APEV. Residues asparagine 265 and asparagine 415 are each glycosylated (N-linked (GlcNAc...) asparagine). N-linked (GlcNAc...) asparagine glycans are attached at residues asparagine 582, asparagine 659, and asparagine 662. Residues 600–711 enclose the Cadherin 6 domain; the sequence is PAGTGIPPKA…LRDSAHEPGV (112 aa). The chain crosses the membrane as a helical span at residues 717–737; the sequence is LALICLAVLLAIFGLLLALFV. The Cytoplasmic portion of the chain corresponds to 738–1180; sequence SICRTERKDN…ESRLGCGRNL (443 aa). 2 disordered regions span residues 857–930 and 973–1026; these read NASR…GPHQ and QFQP…PEED. Phosphoserine is present on serine 859. Residues 904-918 are compositionally biased toward polar residues; sequence PASSATLRRQRNFNG. Positions 1014 to 1026 are enriched in acidic residues; the sequence is PDLEEGPPSPEED. The residue at position 1064 (serine 1064) is a Phosphoserine. Polar residues predominate over residues 1076–1093; the sequence is SSPDATTSEEPRTFQTFG. 2 disordered regions span residues 1076 to 1104 and 1156 to 1180; these read SSPDATTSEEPRTFQTFGKTVGPGPELSP and SGASASEAQGRKKAAESRLGCGRNL.

N-glycosylated. Post-translationally, cleaved by ADAM10 close to the transmembrane domain to release the Protocadherin-12, secreted form in the serum. Cleavage results in reduced cellular adhesion in a cell migration assay. As to expression, expressed in endothelial cells: localizes in vasculogenic rather than angiogenic endothelium. Strongly expressed in a subset of invasive cells of the placenta, named glycogen-rich trophoblasts cells (at protein level). glycogen-rich trophoblasts cells originate from the from the ectoplacental cone where they rapidly form tight islets (at protein level). In adult mice, present at high level in mesangial cells of kidney glomeruli, while expression was not detected in other types of perivascular cells.

The protein localises to the cell membrane. Its subcellular location is the cell junction. It is found in the secreted. Cellular adhesion molecule that may play an important role in cell-cell interactions at interendothelial junctions. Acts as a regulator of cell migration, probably via increasing cell-cell adhesion. Promotes homotypic calcium-dependent aggregation and adhesion and clusters at intercellular junctions. Unable to bind to catenins, weakly associates with the cytoskeleton. The chain is Protocadherin-12 from Mus musculus (Mouse).